The chain runs to 203 residues: uncharacterized protein (203 aa).

An N-terminal signal peptide occupies residues 1–20; that stretch reads MDELILPILILLFLVFVAYF.

This is an uncharacterized protein from Pasteurella multocida (strain Pm70).